Reading from the N-terminus, the 403-residue chain is MKLPVYLDYSATTPVDPRVAEKMIPFLTENFGNPASRSHTFGWTAEQAVENAREEVAKLVNADPREIVWTSGATESDNLAIKGAAEFYQTKGRHLITVKTEHKAVLDTMRELESSGFEVTYLEPMANGLLDLDAFRAAIRPDTVLASVMQVNNEIGVIQDIAAIGGICREHGVIFHVDAAQATGKVEIDLEQLPVDLMSFSAHKTYGPKGIGALYVRRKPRIRLKAQMHGGGHERGLRSGTLATHQIVGMGEAFRIAREEMAAENERIRRLRDRLLAGLADMEEVFINGDLEQRVPHNLNISFNYVEGESLMMAIKDLAVSSGSACTSASLEPSYVLRALGRSDELAHSSIRFTLGRYTTAEDVDFAISLIKDKVARLREISPLWEMYKDGIDLNTVQWAAAH.

Pyridoxal 5'-phosphate contacts are provided by residues 73–74, Asn-153, Gln-181, and 201–203; these read AT and SAH. Position 204 is an N6-(pyridoxal phosphate)lysine (Lys-204). A pyridoxal 5'-phosphate-binding site is contributed by Thr-241. Catalysis depends on Cys-326, which acts as the Cysteine persulfide intermediate. Position 326 (Cys-326) interacts with [2Fe-2S] cluster.

The protein belongs to the class-V pyridoxal-phosphate-dependent aminotransferase family. NifS/IscS subfamily. Homodimer. Forms a heterotetramer with IscU, interacts with other sulfur acceptors. Pyridoxal 5'-phosphate serves as cofactor.

The protein resides in the cytoplasm. The enzyme catalyses (sulfur carrier)-H + L-cysteine = (sulfur carrier)-SH + L-alanine. The protein operates within cofactor biosynthesis; iron-sulfur cluster biosynthesis. Functionally, master enzyme that delivers sulfur to a number of partners involved in Fe-S cluster assembly, tRNA modification or cofactor biosynthesis. Catalyzes the removal of elemental sulfur atoms from cysteine to produce alanine. Functions as a sulfur delivery protein for Fe-S cluster synthesis onto IscU, an Fe-S scaffold assembly protein, as well as other S acceptor proteins. The chain is Cysteine desulfurase IscS from Methylococcus capsulatus (strain ATCC 33009 / NCIMB 11132 / Bath).